Consider the following 155-residue polypeptide: Aspartate carbamoyltransferase regulatory chain (155 aa).

Cys-113, Cys-118, Cys-139, and Cys-142 together coordinate Zn(2+).

Belongs to the PyrI family. In terms of assembly, contains catalytic and regulatory chains. Zn(2+) serves as cofactor.

Involved in allosteric regulation of aspartate carbamoyltransferase. This chain is Aspartate carbamoyltransferase regulatory chain, found in Methanosphaerula palustris (strain ATCC BAA-1556 / DSM 19958 / E1-9c).